Reading from the N-terminus, the 433-residue chain is Pyroglutamylated RF-amide peptide receptor (433 aa).

At 1 to 46 (MQALNITAEQFSRLLSAHNLTREQFIHRYGLRPLVYTPELPARAKV) the chain is on the extracellular side. 2 N-linked (GlcNAc...) asparagine glycosylation sites follow: Asn5 and Asn19. Residues 47 to 67 (AFALAGALIFALALFGNSLVI) traverse the membrane as a helical segment. The Cytoplasmic segment spans residues 68–81 (YVVTRSKAMRTVTN). The chain crosses the membrane as a helical span at residues 82–102 (IFICSLALSDLLIAFFCIPVT). The Extracellular segment spans residues 103–120 (MLQNISDKWLGGAFICKM). The helical transmembrane segment at 121–141 (VPFVQSTAVVTEILTMTCIAV) threads the bilayer. Residues 142 to 162 (ERHQGLVHPFKMKWQYTTRRA) lie on the Cytoplasmic side of the membrane. A helical transmembrane segment spans residues 163-183 (FTILGVVWLAAIIVGSPMWHV). Over 184 to 212 (QRLEIKYDFLYEKEHICCLEEWASPVHQR) the chain is Extracellular. The chain crosses the membrane as a helical span at residues 213-233 (IYSTFILVILFLLPLVVMLVL). At 234–271 (YSKIGYELWIKKRVGDSSALQTIHGKEMSKIARKKKRA) the chain is on the cytoplasmic side. Residues 272–292 (VIMMVTVVALFAACWAPFHVV) traverse the membrane as a helical segment. Topologically, residues 293–313 (HMMVEYSNFEKEYDDVTIKMV) are extracellular. A helical membrane pass occupies residues 314–334 (FAVAQTIGFFNSICNPFVYAF). At 335-433 (MNENFKKNFL…NSTFGSGHEL (99 aa)) the chain is on the cytoplasmic side. Residues 356–389 (SSPARKPGNSGISMMQKRAKLSRPQRPVEETKGD) are disordered.

The protein belongs to the G-protein coupled receptor 1 family. In terms of tissue distribution, highly expressed in the adrenal gland and at moderate levels in the eye and testis. Expressed widely in the brain with high levels in the hypothalamus and moderate levels in the amygdala, basal forebrain, cortex, medulla oblongata, midbrain and thalamus.

The protein localises to the cell membrane. Functionally, receptor for the orexigenic neuropeptide QRFP. The activity of this receptor is mediated by G proteins that modulate adenylate cyclase activity and intracellular calcium levels. This Rattus norvegicus (Rat) protein is Pyroglutamylated RF-amide peptide receptor (Qrfpr).